The primary structure comprises 390 residues: Guanine nucleotide exchange factor for Rab-3A (390 aa).

The segment at 1-60 (MWSGQPHPDEGHPPPLEAVPVPWKSVGPCKSHRESLGGLPETPAGEEAQGEEGPAATQLD) is disordered. The segment covering 40-58 (PETPAGEEAQGEEGPAATQ) has biased composition (low complexity). Positions 73–161 (EKGSEFLKEE…AEVTALKTLV (89 aa)) form a coiled coil. Residues 166-194 (PASPNRELHPQLLSPTKAGPRKGHLRHKS) form a disordered region. S168 and S179 each carry phosphoserine. The span at 184-194 (GPRKGHLRHKS) shows a compositional bias: basic residues.

It belongs to the SEC2 family. In terms of assembly, interacts with RAB3A and IHPK1 through the coiled-coil domain. This interaction is competitive. IHPK1 kinase activity is not required for this interaction.

Its function is as follows. Guanine nucleotide exchange factor (GEF) which may activate RAB3A, a GTPase that regulates synaptic vesicle exocytosis. Promotes the exchange of GDP to GTP, converting inactive GDP-bound Rab proteins into their active GTP-bound form. May also activate RAB8A and RAB8B. The chain is Guanine nucleotide exchange factor for Rab-3A (RAB3IL1) from Bos taurus (Bovine).